The sequence spans 393 residues: Protein TsgA (393 aa).

The next 12 helical transmembrane spans lie at Trp-11 to Met-31, Phe-51 to Pro-71, Phe-78 to Leu-98, Ala-101 to Val-121, Leu-134 to Phe-154, Trp-162 to Gly-182, Ile-206 to Ile-226, Thr-245 to Leu-265, Ile-273 to Pro-293, Ala-297 to Leu-317, Phe-332 to Val-352, and Leu-361 to Val-381.

Belongs to the major facilitator superfamily. TsgA family.

It is found in the cell inner membrane. This chain is Protein TsgA, found in Escherichia coli O6:K15:H31 (strain 536 / UPEC).